A 381-amino-acid chain; its full sequence is Palmitoyltransferase SWF1 (381 aa).

Residues 1-4 (MWLK) are Lumenal-facing. A helical membrane pass occupies residues 5-25 (IYLLSILAISVFTFVFLFGAL). The Cytoplasmic portion of the chain corresponds to 26–64 (PQFEDTAVWKFRKWLSNRPAAIRSWDSKYCGGRLSVVGD). A helical transmembrane segment spans residues 65–85 (FCGSVVAPAAPWSVPILYCAF). Residues 86 to 107 (TTYMFSAYYEDLHPFIAENHWY) are Lumenal-facing. Residues 108–128 (YAWLAPVAYTILVVSFVLATF) traverse the membrane as a helical segment. At 129 to 201 (SDPGKITKQN…NTVGLYNYRW (73 aa)) the chain is on the cytoplasmic side. Positions 157–207 (TECSTCKFTKPARSKHDRFTNKCVAKFDHYCLWINNTVGLYNYRWFLFFLL) constitute a DHHC domain. Cys-187 serves as the catalytic S-palmitoyl cysteine intermediate. Residues 202 to 222 (FLFFLLGNVWTLCWGALLAGL) form a helical membrane-spanning segment. Residues 223 to 257 (KMIVMVAAEYKDHPKPLPSIFSQWWQVMITNENKR) are Lumenal-facing. Residues 258-278 (VGIIFLLSVSTGALACAFTAM) traverse the membrane as a helical segment. Over 279-381 (HFYYIYLGAT…KAVMFPNSAY (103 aa)) the chain is Cytoplasmic.

This sequence belongs to the DHHC palmitoyltransferase family. SWF1 subfamily.

It is found in the endoplasmic reticulum membrane. The enzyme catalyses L-cysteinyl-[protein] + hexadecanoyl-CoA = S-hexadecanoyl-L-cysteinyl-[protein] + CoA. In terms of biological role, palmitoyltransferase that targets several endosomal SNAREs. Palmitoylates the SNAREs at cysteine residues close to the cytoplasmic end of their transmembrane domain. May have a role in the cellular quality control of transmembrane domain-containing proteins. The protein is Palmitoyltransferase SWF1 (SWF1) of Yarrowia lipolytica (strain CLIB 122 / E 150) (Yeast).